Consider the following 257-residue polypeptide: NAD-dependent protein deacylase (257 aa).

A Deacetylase sirtuin-type domain is found at 1–252 (MLGHAAKLLA…LRRVKDIMAE (252 aa)). 20–39 (GAGISAESGIPTFRGRNGLW) is a binding site for NAD(+). Substrate contacts are provided by Tyr64 and Arg67. 98–101 (QNVD) contributes to the NAD(+) binding site. Catalysis depends on His116, which acts as the Proton acceptor. 4 residues coordinate Zn(2+): Cys124, Cys127, Cys151, and Cys154. Residues 191-193 (GTS), 217-219 (NVE), and Ala235 each bind NAD(+).

Belongs to the sirtuin family. Class III subfamily. It depends on Zn(2+) as a cofactor.

The protein resides in the cytoplasm. The catalysed reaction is N(6)-acetyl-L-lysyl-[protein] + NAD(+) + H2O = 2''-O-acetyl-ADP-D-ribose + nicotinamide + L-lysyl-[protein]. The enzyme catalyses N(6)-succinyl-L-lysyl-[protein] + NAD(+) + H2O = 2''-O-succinyl-ADP-D-ribose + nicotinamide + L-lysyl-[protein]. NAD-dependent lysine deacetylase and desuccinylase that specifically removes acetyl and succinyl groups on target proteins. Modulates the activities of several proteins which are inactive in their acylated form. Deacetylates the N-terminal lysine residue of Alba, the major archaeal chromatin protein and that, in turn, increases Alba's DNA binding affinity, thereby repressing transcription. The chain is NAD-dependent protein deacylase from Thermococcus kodakarensis (strain ATCC BAA-918 / JCM 12380 / KOD1) (Pyrococcus kodakaraensis (strain KOD1)).